A 328-amino-acid chain; its full sequence is MKFGIEFVPSDPALKIAYYAKLSEQQGFDYVWITDHYNNRDVYSTLTVLALNTNSIKIGSGVTNSYTRNPAITASSIASIAEISGGRAVLGLGPGDKATFDAMGIAWEKPLATTKEAIQAIRDFIAGKKVSMDGEMVKFAGAKLAFKAGNVPIYMGAQGPKMLELAGEVADGVLINASHPKDFEVAVEQIRKGAEKVGRDPSEVDVTAYACFSIDKDPAKAINAAKVVVAFIVAGSPDLVLERHGIPVDAKKQIGDAIAKGDFGALMGGLVTPQMIEAFAICGTPEDCMKRIKDLEAIGVTQIVAGSPIGPEKEKAIKLIGKEIIAKM.

Belongs to the mer family.

Its subcellular location is the cytoplasm. It carries out the reaction 5-methyl-5,6,7,8-tetrahydromethanopterin + oxidized coenzyme F420-(gamma-L-Glu)(n) + H(+) = 5,10-methylenetetrahydromethanopterin + reduced coenzyme F420-(gamma-L-Glu)(n). Its pathway is one-carbon metabolism; methanogenesis from CO(2); methyl-coenzyme M from 5,10-methylene-5,6,7,8-tetrahydromethanopterin: step 1/2. Its function is as follows. Catalyzes the reversible reduction of methylene-H(4)MPT to methyl-H(4)MPT. The sequence is that of 5,10-methylenetetrahydromethanopterin reductase from Methanosarcina acetivorans (strain ATCC 35395 / DSM 2834 / JCM 12185 / C2A).